The following is a 426-amino-acid chain: MAPRKRPENQKTPEVVVRPKSKRNRSPRELEPEAKKLCVKGPGSSRRFDSGLWAGLASLRVPPLCSSIVRALHQHKLGTAAWPSLQQGLQQSFLNSLASYRIFQKAAPFDRRATSLAWHPTHPSTLAVGSKGGDILLWNFGIKDKPTFIKGIGAGGSITGMKFNPLNTNQFFTSSMEGTTRLQDFKGNTLRVFASSDTCNVWFCSLDVSVKSRVVVTGDNVGHVILLNMDGRELWNLRMHKKKVTHVALNPCCDWLLATASVDQTVKIWDLRQVRGKSSFLHSLPHRHPVNAAHFSPDGAQLLTTDQKSEIRVYSACQWDCPPSLIPHPHRHFQHLTPIKASWHPRYNLIVVGRYPDPNFKSCSPHELRTIDVFDGSSGKIMYQLYDPESSGIMSLNEFNPMGDTLASVMGYHILVWSPEDAGTQK.

Residues 1-11 (MAPRKRPENQK) show a composition bias toward basic and acidic residues. The interval 1 to 33 (MAPRKRPENQKTPEVVVRPKSKRNRSPRELEPE) is disordered. Residue S26 is modified to Phosphoserine. N6-acetyllysine occurs at positions 35 and 76. 2 required for interaction with DDB1 regions span residues 67 to 78 (SIVRALHQHKLG) and 86 to 97 (QQGLQQSFLNSL). WD repeat units lie at residues 115-150 (SLAWHPTHPSTLAVGSKGGDILLWNFGIKDKPTFIK), 158-193 (ITGMKFNPLNTNQFFTSSMEGTTRLQDFKGNTLRVF), 202-237 (WFCSLDVSVKSRVVVTGDNVGHVILLNMDGRELWNL), 243-286 (KVTH…SLPH), and 289-328 (PVNAAHFSPDGAQLLTTDQKSEIRVYSACQWDCPPSLIPH). Residues 255–273 (WLLATASVDQTVKIWDLRQ) carry the DWD box motif. Positions 333–335 (FQH) are photolesion recognition. WD repeat units lie at residues 342 to 385 (SWHP…MYQL) and 395 to 419 (SLNEFNPMGDTLASVMGYHILVWSP).

Belongs to the WD repeat DDB2/WDR76 family. In terms of assembly, component of the UV-DDB complex which includes DDB1 and DDB2. The UV-DDB complex interacts with monoubiquitinated histone H2A and binds to XPC via the DDB2 subunit. Component of the DCX (DDB1-CUL4-X-box) E3 ubiquitin-protein ligase complex DDB1-CUL4-ROC1 (also known as CUL4-DDB-ROC1 and CUL4-DDB-RBX1), which includes CUL4A or CUL4B, DDB1, DDB2 and RBX1. DDB2 may function as the substrate recognition module within this complex. The DDB1-CUL4-ROC1 complex may associate with the COP9 signalosome, and this inhibits the E3 ubiquitin-protein ligase activity of the complex. A large number of other DCX complexes may also exist in which an alternate substrate targeting subunit replaces DDB2. These targeting subunits are generally known as DCAF (DDB1- and CUL4-associated factor) or CDW (CUL4-DDB1-associated WD40-repeat) proteins. In terms of processing, phosphorylation by ABL1 negatively regulate UV-DDB activity. Ubiquitinated by CUL4A in response to UV irradiation. Ubiquitination appears to both impair DNA-binding and promotes ubiquitin-dependent proteolysis. Degradation of DDB2 at sites of DNA damage may be a prerequisite for their recognition by XPC and subsequent repair. CUL4A-mediated degradation appears to be promoted by ABL1. Post-translationally, ubiquitinated, leading to proteasomal degradation, and deubiquitinated by USP24. Deubiquitinated by USP44; leading to its stabilization on DNA lesions. In terms of processing, acetylated. Deacetylation by SIRT6 in response to UV stress facilitates nucleotide excision repair pathway (the NER pathway) transduction.

Its subcellular location is the nucleus. The protein resides in the chromosome. It functions in the pathway protein modification; protein ubiquitination. Functionally, protein, which is both involved in DNA repair and protein ubiquitination, as part of the UV-DDB complex and DCX (DDB1-CUL4-X-box) complexes, respectively. Core component of the UV-DDB complex (UV-damaged DNA-binding protein complex), a complex that recognizes UV-induced DNA damage and recruit proteins of the nucleotide excision repair pathway (the NER pathway) to initiate DNA repair. The UV-DDB complex preferentially binds to cyclobutane pyrimidine dimers (CPD), 6-4 photoproducts (6-4 PP), apurinic sites and short mismatches. Also functions as the substrate recognition module for the DCX (DDB2-CUL4-X-box) E3 ubiquitin-protein ligase complex DDB2-CUL4-ROC1 (also known as CUL4-DDB-ROC1 and CUL4-DDB-RBX1). The DDB2-CUL4-ROC1 complex may ubiquitinate histone H2A, histone H3 and histone H4 at sites of UV-induced DNA damage. The ubiquitination of histones may facilitate their removal from the nucleosome and promote subsequent DNA repair. The DDB2-CUL4-ROC1 complex also ubiquitinates XPC, which may enhance DNA-binding by XPC and promote NER. The DDB2-CUL4-ROC1 complex also ubiquitinates KAT7/HBO1 in response to DNA damage, leading to its degradation: recognizes KAT7/HBO1 following phosphorylation by ATR. The chain is DNA damage-binding protein 2 (DDB2) from Bos taurus (Bovine).